Reading from the N-terminus, the 186-residue chain is Thioredoxin M2, chloroplastic (186 aa).

Residues 1–72 (MAAFTCTSRP…RVSRLRRAVV (72 aa)) constitute a chloroplast transit peptide. The 114-residue stretch at 73–186 (CEAQETTTDI…LTSSLDKFLP (114 aa)) folds into the Thioredoxin domain. Active-site nucleophile residues include C110 and C113. A disulfide bridge links C110 with C113.

Belongs to the thioredoxin family. Plant M-type subfamily. In terms of assembly, interacts with G6PD1 and G6PD4. Interacts with PGL3.

The protein localises to the plastid. It localises to the chloroplast stroma. In terms of biological role, thiol-disulfide oxidoreductase that may participate in various redox reactions. May activate NADP-malate dehydrogenase. The chain is Thioredoxin M2, chloroplastic from Arabidopsis thaliana (Mouse-ear cress).